The sequence spans 356 residues: D-alanine--D-alanine ligase (356 aa).

Residues 134-339 (KQLFATRGLP…YSELITDLIN (206 aa)) enclose the ATP-grasp domain. Residue 167 to 222 (EGKLTYPVFVKPANLGSSVGISKCTDSETLIHGIEEALQFDRKLVIEQGVNAREVE) coordinates ATP. Mg(2+) is bound by residues aspartate 293, glutamate 306, and asparagine 308.

Belongs to the D-alanine--D-alanine ligase family. Requires Mg(2+) as cofactor. Mn(2+) serves as cofactor.

It localises to the cytoplasm. The enzyme catalyses 2 D-alanine + ATP = D-alanyl-D-alanine + ADP + phosphate + H(+). Its pathway is cell wall biogenesis; peptidoglycan biosynthesis. Functionally, cell wall formation. In Macrococcus caseolyticus (strain JCSC5402) (Macrococcoides caseolyticum), this protein is D-alanine--D-alanine ligase.